The sequence spans 324 residues: Carbonic anhydrase, chloroplastic (324 aa).

Belongs to the beta-class carbonic anhydrase family. As to quaternary structure, homohexamer.

Its subcellular location is the plastid. The protein localises to the chloroplast stroma. The enzyme catalyses hydrogencarbonate + H(+) = CO2 + H2O. Its function is as follows. Reversible hydration of carbon dioxide. The protein is Carbonic anhydrase, chloroplastic of Hordeum vulgare (Barley).